Here is a 408-residue protein sequence, read N- to C-terminus: Epsin-3 (408 aa).

An N-acetylserine modification is found at S2. Residues N24–R157 form the ENTH domain. The tract at residues E162–N182 is disordered. Phosphoserine occurs at positions 196, 198, 203, 212, and 223. Disordered stretches follow at residues A199 to A322 and T338 to F408. Over residues F201 to D210 the composition is skewed to acidic residues. Residues G211–Q231 are compositionally biased toward polar residues. Over residues K249–D263 the composition is skewed to basic and acidic residues. Acidic residues predominate over residues E264–S273. Polar residues predominate over residues V279–G317. A compositionally biased stretch (low complexity) spans T338–P361. Polar residues-rich tracts occupy residues V362–T371 and Q388–T398. Basic and acidic residues predominate over residues S399–F408.

As to quaternary structure, interacts with the clathrin adapter GGA2, and VPS27.

The protein resides in the cytoplasm. It localises to the golgi apparatus. The protein localises to the trans-Golgi network membrane. Its subcellular location is the cytoplasmic vesicle. It is found in the clathrin-coated vesicle membrane. In terms of biological role, involved in the recruitment of clathrin to the Golgi network and endosomes to form clathrin coated vesicles. Plays a role in the trafficking of clathrin between the Golgi network and endosomes. Binds to membranes enriched in phosphatidylinositol-3,5-bisphosphate (PtdIns(3,5)P2) and, in association with VPS27, is involved in protein sorting at the multivesicular body (MVB). This is Epsin-3 (ENT3) from Saccharomyces cerevisiae (strain ATCC 204508 / S288c) (Baker's yeast).